The primary structure comprises 75 residues: Exodeoxyribonuclease 7 small subunit (75 aa).

Belongs to the XseB family. Heterooligomer composed of large and small subunits.

It is found in the cytoplasm. It carries out the reaction Exonucleolytic cleavage in either 5'- to 3'- or 3'- to 5'-direction to yield nucleoside 5'-phosphates.. In terms of biological role, bidirectionally degrades single-stranded DNA into large acid-insoluble oligonucleotides, which are then degraded further into small acid-soluble oligonucleotides. The chain is Exodeoxyribonuclease 7 small subunit from Elusimicrobium minutum (strain Pei191).